We begin with the raw amino-acid sequence, 212 residues long: Thymidylate kinase (212 aa).

11 to 18 is a binding site for ATP; that stretch reads GPEGAGKT.

Belongs to the thymidylate kinase family.

The catalysed reaction is dTMP + ATP = dTDP + ADP. Phosphorylation of dTMP to form dTDP in both de novo and salvage pathways of dTTP synthesis. In Streptococcus pneumoniae (strain Taiwan19F-14), this protein is Thymidylate kinase.